The chain runs to 481 residues: uncharacterized protein (481 aa).

This sequence to M.tuberculosis RV2411c.

This is an uncharacterized protein from Synechocystis sp. (strain ATCC 27184 / PCC 6803 / Kazusa).